A 433-amino-acid polypeptide reads, in one-letter code: GTPase Obg (433 aa).

One can recognise an Obg domain in the interval 2-160 (PTFVDQTKIE…RVLRLELKLL (159 aa)). The 174-residue stretch at 161–334 (ADVGLVGFPS…LMNDTATLVE (174 aa)) folds into the OBG-type G domain. GTP contacts are provided by residues 167-174 (GFPSVGKS), 192-196 (FTTLT), 214-217 (DLPG), 284-287 (SQMD), and 315-317 (SSV). Residues Ser-174 and Thr-194 each contribute to the Mg(2+) site. The region spanning 355 to 433 (YKAPQRNEFM…IGKFVFEFVQ (79 aa)) is the OCT domain.

The protein belongs to the TRAFAC class OBG-HflX-like GTPase superfamily. OBG GTPase family. In terms of assembly, monomer. Mg(2+) is required as a cofactor.

It localises to the cytoplasm. Its function is as follows. An essential GTPase which binds GTP, GDP and possibly (p)ppGpp with moderate affinity, with high nucleotide exchange rates and a fairly low GTP hydrolysis rate. Plays a role in control of the cell cycle, stress response, ribosome biogenesis and in those bacteria that undergo differentiation, in morphogenesis control. In Lactobacillus acidophilus (strain ATCC 700396 / NCK56 / N2 / NCFM), this protein is GTPase Obg.